Here is a 210-residue protein sequence, read N- to C-terminus: Proteasome subunit beta 2 (210 aa).

Residues 1 to 12 (MSNNVEEKILHG) constitute a propeptide, removed in mature form; by autocatalysis. Catalysis depends on Thr-13, which acts as the Nucleophile.

Belongs to the peptidase T1B family. As to quaternary structure, the 20S proteasome core is composed of 14 alpha and 14 beta subunits that assemble into four stacked heptameric rings, resulting in a barrel-shaped structure. The two inner rings, each composed of seven catalytic beta subunits, are sandwiched by two outer rings, each composed of seven alpha subunits. The catalytic chamber with the active sites is on the inside of the barrel. Has a gated structure, the ends of the cylinder being occluded by the N-termini of the alpha-subunits. Is capped at one or both ends by the proteasome regulatory ATPase, PAN.

Its subcellular location is the cytoplasm. The catalysed reaction is Cleavage of peptide bonds with very broad specificity.. With respect to regulation, the formation of the proteasomal ATPase PAN-20S proteasome complex, via the docking of the C-termini of PAN into the intersubunit pockets in the alpha-rings, triggers opening of the gate for substrate entry. Interconversion between the open-gate and close-gate conformations leads to a dynamic regulation of the 20S proteasome proteolysis activity. Functionally, component of the proteasome core, a large protease complex with broad specificity involved in protein degradation. The chain is Proteasome subunit beta 2 from Cenarchaeum symbiosum (strain A).